The primary structure comprises 670 residues: DNA ligase (670 aa).

NAD(+) contacts are provided by residues 35–39, 84–85, and E116; these read DSVYD and SL. The active-site N6-AMP-lysine intermediate is K118. NAD(+) is bound by residues R139, E176, K293, and K317. Positions 411, 414, 429, and 435 each coordinate Zn(2+). The BRCT domain occupies 592-670; the sequence is VVKSEIAGKT…EEAFLKLLKS (79 aa).

This sequence belongs to the NAD-dependent DNA ligase family. LigA subfamily. Mg(2+) serves as cofactor. Mn(2+) is required as a cofactor.

It carries out the reaction NAD(+) + (deoxyribonucleotide)n-3'-hydroxyl + 5'-phospho-(deoxyribonucleotide)m = (deoxyribonucleotide)n+m + AMP + beta-nicotinamide D-nucleotide.. Its function is as follows. DNA ligase that catalyzes the formation of phosphodiester linkages between 5'-phosphoryl and 3'-hydroxyl groups in double-stranded DNA using NAD as a coenzyme and as the energy source for the reaction. It is essential for DNA replication and repair of damaged DNA. The chain is DNA ligase from Coxiella burnetii (strain Dugway 5J108-111).